We begin with the raw amino-acid sequence, 387 residues long: MTVLKMTDLDLQGKRVLIREDLNVPVKDGVVASDARILAALPTIKLALEKGAAVMVCSHLGRPTEGEFSAENSLKPVADYLSKALGRDVPLVADYLDGVAVQAGELVLFENVRFNKGEKKNADELAQKYAALCDVFVMDAFGTAHRAEGSTHGVAKFAKVAAAGPLLAAELDALGKALKAPAKPMAAIVAGSKVSTKLDVLNSLSSVCDQLIVGGGIANTFLAAAGHPVGKSLYEPDLVDTAKAIAAKVSVPLPVDVVVAKEFAESAEATVKAIADVAADDMILDIGPQTAANFAELLKSSKTILWNGPVGVFEFDQFGNGTKVLAKAIADSAAFSIAGGGDTLAAIDKYGVSKEISYISTGGGAFLEFVEGKVLPAVAILEERAKA.

Substrate contacts are provided by residues 21-23 (DLN), R36, 59-62 (HLGR), R113, and R146. ATP contacts are provided by residues K197, E314, and 340–343 (GGDT).

It belongs to the phosphoglycerate kinase family. As to quaternary structure, monomer.

It localises to the cytoplasm. It catalyses the reaction (2R)-3-phosphoglycerate + ATP = (2R)-3-phospho-glyceroyl phosphate + ADP. It participates in carbohydrate degradation; glycolysis; pyruvate from D-glyceraldehyde 3-phosphate: step 2/5. This Pseudomonas putida (strain ATCC 47054 / DSM 6125 / CFBP 8728 / NCIMB 11950 / KT2440) protein is Phosphoglycerate kinase.